Consider the following 153-residue polypeptide: Ubiquitin-conjugating enzyme E2 35 (153 aa).

A UBC core domain is found at 5 to 151 (NLPRRIIKET…AKEWTRLYAS (147 aa)). Cys-89 functions as the Glycyl thioester intermediate in the catalytic mechanism.

It belongs to the ubiquitin-conjugating enzyme family. In terms of assembly, interacts with yeast and human Mms2, with the RING domain of RGLG2 and with UEV1A, UEV1B, UEV1C and UEV1D. Ubiquitously expressed at low level. Mainly expressed in the vasculature.

It catalyses the reaction S-ubiquitinyl-[E1 ubiquitin-activating enzyme]-L-cysteine + [E2 ubiquitin-conjugating enzyme]-L-cysteine = [E1 ubiquitin-activating enzyme]-L-cysteine + S-ubiquitinyl-[E2 ubiquitin-conjugating enzyme]-L-cysteine.. It functions in the pathway protein modification; protein ubiquitination. In terms of biological role, catalyzes the synthesis of non-canonical poly-ubiquitin chains that are linked through 'Lys-63'. This type of poly-ubiquitination does not lead to protein degradation by the proteasome. Mediates transcriptional activation of target genes. Required for postreplication repair of UV-damaged DNA and for adapting root developmental programs to suboptimal availability of iron. The sequence is that of Ubiquitin-conjugating enzyme E2 35 (UBC35) from Arabidopsis thaliana (Mouse-ear cress).